The following is a 377-amino-acid chain: Transmembrane protein 237A (377 aa).

Basic and acidic residues-rich tracts occupy residues 1–11 (MCVTSRADKMP), 43–64 (LESRRQSESREPLTPEPHDNPP), and 74–87 (HTFENEGEQQDHPN). Residues 1-124 (MCVTSRADKM…NQSHNELGVE (124 aa)) are disordered. Transmembrane regions (helical) follow at residues 198-218 (IIGLFSHGFLAGYAVWNIIVV), 239-259 (LAYPAQSLLYLLLAISTVSAF), 273-293 (GFLTLDPAALASFLYFAALIL), and 326-346 (PWIVVNLVVALLVGLAWVFVA).

This sequence belongs to the TMEM237 family.

The protein localises to the membrane. It localises to the cell projection. It is found in the cilium. In terms of biological role, component of the transition zone in primary cilia. Required for ciliogenesis. This is Transmembrane protein 237A (tmem237a) from Danio rerio (Zebrafish).